Consider the following 455-residue polypeptide: uncharacterized protein (455 aa).

Positions Met1–Cys27 are cleaved as a signal peptide. At Glu29–Ser434 the chain is on the extracellular side. N-linked (GlcNAc...) asparagine glycans are attached at residues Asn136, Asn148, Asn210, and Asn298. The tract at residues Ser383–Thr402 is disordered. N-linked (GlcNAc...) asparagine glycans are attached at residues Asn421 and Asn432. The helical transmembrane segment at Ser435–Phe455 threads the bilayer.

It localises to the membrane. This is an uncharacterized protein from Dictyostelium discoideum (Social amoeba).